Consider the following 142-residue polypeptide: Universal stress protein G (142 aa).

This sequence belongs to the universal stress protein A family.

This chain is Universal stress protein G (uspG), found in Escherichia coli O157:H7.